We begin with the raw amino-acid sequence, 334 residues long: Ribosomal RNA small subunit methyltransferase H (334 aa).

S-adenosyl-L-methionine-binding positions include 39–41, aspartate 59, phenylalanine 83, aspartate 100, and glutamine 107; that span reads GGH. Positions 303-334 are disordered; the sequence is ERTQAHGAERSDMRRAERPDARRAEHGEVLPP.

This sequence belongs to the methyltransferase superfamily. RsmH family.

The protein resides in the cytoplasm. It carries out the reaction cytidine(1402) in 16S rRNA + S-adenosyl-L-methionine = N(4)-methylcytidine(1402) in 16S rRNA + S-adenosyl-L-homocysteine + H(+). Its function is as follows. Specifically methylates the N4 position of cytidine in position 1402 (C1402) of 16S rRNA. The polypeptide is Ribosomal RNA small subunit methyltransferase H (Verminephrobacter eiseniae (strain EF01-2)).